A 152-amino-acid chain; its full sequence is UPF0756 membrane protein EF_1246 (152 aa).

Transmembrane regions (helical) follow at residues 4–24, 52–72, 85–105, and 115–135; these read WLFL…SLLI, LGVT…QIGL, WLGI…VGLI, and LVFG…GPII.

Belongs to the UPF0756 family.

The protein resides in the cell membrane. The sequence is that of UPF0756 membrane protein EF_1246 from Enterococcus faecalis (strain ATCC 700802 / V583).